A 177-amino-acid polypeptide reads, in one-letter code: Large ribosomal subunit protein uL6 (177 aa).

It belongs to the universal ribosomal protein uL6 family. As to quaternary structure, part of the 50S ribosomal subunit.

Its function is as follows. This protein binds to the 23S rRNA, and is important in its secondary structure. It is located near the subunit interface in the base of the L7/L12 stalk, and near the tRNA binding site of the peptidyltransferase center. The protein is Large ribosomal subunit protein uL6 of Bradyrhizobium sp. (strain BTAi1 / ATCC BAA-1182).